The sequence spans 244 residues: Uridylate kinase (244 aa).

Position 16 to 19 (K16 to G19) interacts with ATP. UMP is bound at residue G58. ATP-binding residues include G59 and R63. UMP contacts are provided by residues D78 and V139–T146. ATP is bound by residues T166, Y172, and D175.

Belongs to the UMP kinase family. In terms of assembly, homohexamer.

The protein localises to the cytoplasm. The catalysed reaction is UMP + ATP = UDP + ADP. Its pathway is pyrimidine metabolism; CTP biosynthesis via de novo pathway; UDP from UMP (UMPK route): step 1/1. Inhibited by UTP. In terms of biological role, catalyzes the reversible phosphorylation of UMP to UDP. This chain is Uridylate kinase, found in Novosphingobium aromaticivorans (strain ATCC 700278 / DSM 12444 / CCUG 56034 / CIP 105152 / NBRC 16084 / F199).